Reading from the N-terminus, the 620-residue chain is Chaperone protein HscA homolog (620 aa).

This sequence belongs to the heat shock protein 70 family.

Its function is as follows. Chaperone involved in the maturation of iron-sulfur cluster-containing proteins. Has a low intrinsic ATPase activity which is markedly stimulated by HscB. The chain is Chaperone protein HscA homolog from Bordetella petrii (strain ATCC BAA-461 / DSM 12804 / CCUG 43448).